Reading from the N-terminus, the 75-residue chain is ATP synthase subunit c (75 aa).

A run of 2 helical transmembrane segments spans residues 9–29 (IGAG…GNIW) and 52–72 (IGFA…LILL).

Belongs to the ATPase C chain family. As to quaternary structure, F-type ATPases have 2 components, F(1) - the catalytic core - and F(0) - the membrane proton channel. F(1) has five subunits: alpha(3), beta(3), gamma(1), delta(1), epsilon(1). F(0) has four main subunits: a(1), b(1), b'(1) and c(10-14). The alpha and beta chains form an alternating ring which encloses part of the gamma chain. F(1) is attached to F(0) by a central stalk formed by the gamma and epsilon chains, while a peripheral stalk is formed by the delta, b and b' chains.

The protein localises to the cell inner membrane. F(1)F(0) ATP synthase produces ATP from ADP in the presence of a proton or sodium gradient. F-type ATPases consist of two structural domains, F(1) containing the extramembraneous catalytic core and F(0) containing the membrane proton channel, linked together by a central stalk and a peripheral stalk. During catalysis, ATP synthesis in the catalytic domain of F(1) is coupled via a rotary mechanism of the central stalk subunits to proton translocation. In terms of biological role, key component of the F(0) channel; it plays a direct role in translocation across the membrane. A homomeric c-ring of between 10-14 subunits forms the central stalk rotor element with the F(1) delta and epsilon subunits. The polypeptide is ATP synthase subunit c (Rhodospirillum rubrum (strain ATCC 11170 / ATH 1.1.1 / DSM 467 / LMG 4362 / NCIMB 8255 / S1)).